We begin with the raw amino-acid sequence, 291 residues long: Phosphatidylcholine-sterol acyltransferase (291 aa).

N-linked (GlcNAc...) asparagine glycosylation occurs at asparagine 28. Catalysis depends on serine 125, which acts as the Nucleophile. An N-linked (GlcNAc...) asparagine glycan is attached at asparagine 179. An intrachain disulfide couples cysteine 220 to cysteine 263. Aspartate 252 (charge relay system) is an active-site residue. A glycan (N-linked (GlcNAc...) asparagine) is linked at asparagine 280.

It belongs to the AB hydrolase superfamily. Lipase family.

The protein localises to the secreted. It catalyses the reaction a sterol + a 1,2-diacyl-sn-glycero-3-phosphocholine = a sterol ester + a 1-acyl-sn-glycero-3-phosphocholine. Its activity is regulated as follows. APOA1 is the most potent activator in plasma. Also activated by APOE, APOC1 and APOA4. In terms of biological role, central enzyme in the extracellular metabolism of plasma lipoproteins. Synthesized mainly in the liver and secreted into plasma where it converts cholesterol and phosphatidylcholines (lecithins) to cholesteryl esters and lysophosphatidylcholines on the surface of high and low density lipoproteins (HDLs and LDLs). The cholesterol ester is then transported back to the liver. Has a preference for plasma 16:0-18:2 or 18:O-18:2 phosphatidylcholines. Also produced in the brain by primary astrocytes, and esterifies free cholesterol on nascent APOE-containing lipoproteins secreted from glia and influences cerebral spinal fluid (CSF) APOE- and APOA1 levels. Together with APOE and the cholesterol transporter ABCA1, plays a key role in the maturation of glial-derived, nascent lipoproteins. Required for remodeling high-density lipoprotein particles into their spherical forms. This chain is Phosphatidylcholine-sterol acyltransferase (LCAT), found in Myodes glareolus (Bank vole).